A 644-amino-acid chain; its full sequence is Exoribonuclease 2 (644 aa).

Residues 189 to 516 (REDLTALNFV…NHRLLKAMIT (328 aa)) enclose the RNB domain. The S1 motif domain occupies 561-643 (DTRFTAEIID…ETRNVIARPV (83 aa)).

Belongs to the RNR ribonuclease family. RNase II subfamily.

Its subcellular location is the cytoplasm. It catalyses the reaction Exonucleolytic cleavage in the 3'- to 5'-direction to yield nucleoside 5'-phosphates.. Its function is as follows. Involved in mRNA degradation. Hydrolyzes single-stranded polyribonucleotides processively in the 3' to 5' direction. The sequence is that of Exoribonuclease 2 from Yersinia pestis bv. Antiqua (strain Antiqua).